We begin with the raw amino-acid sequence, 292 residues long: RNA 5'-monophosphate methyltransferase (292 aa).

Positions 1–20 are disordered; that stretch reads MAVPTELHGGSVKETAAEKE. S-adenosyl-L-methionine contacts are provided by residues arginine 46, asparagine 76, aspartate 110, 135 to 136, and methionine 164; that span reads DF. The Bin3-type SAM domain maps to 53–274; sequence ELLRQLFPES…KQTIETHPIP (222 aa).

Belongs to the methyltransferase superfamily. As to quaternary structure, interacts with DICER1; the interaction may be mediated by RNA.

It is found in the cytoplasm. It carries out the reaction a 5'-end 5'-phospho-ribonucleoside-RNA + S-adenosyl-L-methionine = a 5'-end (5'-methylphospho)-ribonucleoside-RNA + S-adenosyl-L-homocysteine. The catalysed reaction is a 5'-end 5'-phospho-ribonucleoside-RNA + 2 S-adenosyl-L-methionine = a 5'-end (5'-bismethylphospho)-ribonucleoside-RNA + 2 S-adenosyl-L-homocysteine. Functionally, O-methyltransferase that specifically monomethylates 5'-monophosphate of cytoplasmic histidyl tRNA (tRNA(His)), acting as a capping enzyme by protecting tRNA(His) from cleavage by DICER1. Also able, with less efficiently, to methylate the 5' monophosphate of a subset of pre-miRNAs, acting as a negative regulator of miRNA processing. The 5' monophosphate of pre-miRNAs is recognized by DICER1 and is required for pre-miRNAs processing: methylation at this position reduces the processing of pre-miRNAs by DICER1. Was also reported to mediate dimethylation of pre-miR-145; however dimethylation cannot be reproduced by another group which observes a monomethylation of pre-miR-145. This Pongo abelii (Sumatran orangutan) protein is RNA 5'-monophosphate methyltransferase (BCDIN3D).